Reading from the N-terminus, the 361-residue chain is Beta-hexosaminidase (361 aa).

Residues D69, R77, R144, and 174-175 (KH) each bind substrate. Catalysis depends on H187, which acts as the Proton donor/acceptor. D258 functions as the Nucleophile in the catalytic mechanism.

It belongs to the glycosyl hydrolase 3 family. NagZ subfamily.

The protein resides in the cytoplasm. The catalysed reaction is Hydrolysis of terminal non-reducing N-acetyl-D-hexosamine residues in N-acetyl-beta-D-hexosaminides.. It functions in the pathway cell wall biogenesis; peptidoglycan recycling. In terms of biological role, plays a role in peptidoglycan recycling by cleaving the terminal beta-1,4-linked N-acetylglucosamine (GlcNAc) from peptide-linked peptidoglycan fragments, giving rise to free GlcNAc, anhydro-N-acetylmuramic acid and anhydro-N-acetylmuramic acid-linked peptides. The protein is Beta-hexosaminidase of Neisseria meningitidis serogroup C (strain 053442).